The following is a 514-amino-acid chain: MSIRDEIKKRRTFAIISHPDAGKTTITEQLLYFGGEIREAGTVKGKKTGNFAKSDWMDIEKQRGISVTSSVMQFDYAGKRVNILDTPGHEDFSEDTYRTLMAVDAAVMVVDSAKGIEAQTKKLFEVVKHRGIPVFTFMNKLDRDGREPLDLLEELEEVLGIASYPMNWPIGMGKAFEGLYDLYNERLELYKGNERFAKIEDGDTLFANNPFYEQAKEDIELLTEAGNEFSEEAILAGELTPVFFGSALTNFGVQTFLDTFLKFAPEPHGHKTVDGDEIDPLNKDFSGFVFKIQANMDPRHRDRIAFVRIVSGEFERGMSVNLTRTGKGAKLSNVTQFMAESRENVENAVAGDIIGVYDTGTYQVGDTLTVGKNKFEFEPLPTFTPELFMKVSAKNVMKQKSFHKGIEQLVQEGAIQLYTNYQTGEYMLGAVGQLQFEVFKHRMENEYNAEVVMTPMGKKTVRWIQPEDLDERMSSSRNILAKDRFDQPVFLFENDFALRWFADKYPDVTLEEKM.

In terms of domain architecture, tr-type G spans 8–268 (KKRRTFAIIS…TFLKFAPEPH (261 aa)). Residues 17–24 (SHPDAGKT), 85–89 (DTPGH), and 139–142 (NKLD) each bind GTP.

The protein belongs to the TRAFAC class translation factor GTPase superfamily. Classic translation factor GTPase family. PrfC subfamily.

The protein resides in the cytoplasm. Its function is as follows. Increases the formation of ribosomal termination complexes and stimulates activities of RF-1 and RF-2. It binds guanine nucleotides and has strong preference for UGA stop codons. It may interact directly with the ribosome. The stimulation of RF-1 and RF-2 is significantly reduced by GTP and GDP, but not by GMP. This Streptococcus thermophilus (strain ATCC BAA-491 / LMD-9) protein is Peptide chain release factor 3.